We begin with the raw amino-acid sequence, 363 residues long: UV excision repair protein RAD23 homolog A (363 aa).

Residues 1–81 (MAVTITLKTL…VVVMVTKTKA (81 aa)) enclose the Ubiquitin-like domain. The tract at residues 81-160 (AGQGTSAPPE…EDAASTLVTG (80 aa)) is disordered. The segment covering 85-103 (TSAPPEASPTAAPESSTSF) has biased composition (low complexity). A Glycyl lysine isopeptide (Lys-Gly) (interchain with G-Cter in ubiquitin) cross-link involves residue lysine 122. Serine 123, serine 128, serine 133, serine 136, and serine 138 each carry phosphoserine. Residues 126-147 (EESAPTTSPESVSGSVPSSGSS) show a composition bias toward low complexity. A UBA 1 domain is found at 161–201 (SEYETMLTEIMSMGYERERVVAALRASYNNPHRAVEYLLTG). The interval 203–227 (PGSPEPEHGSVQESQVSEQPATEAA) is disordered. At serine 205 the chain carries Phosphoserine. A compositionally biased stretch (polar residues) spans 213 to 222 (VQESQVSEQP). A phosphoserine mark is found at serine 295 and serine 357. The 41-residue stretch at 318-358 (PQEKEAIERLKALGFPESLVIQAYFACEKNENLAANFLLSQ) folds into the UBA 2 domain. Residues 319 to 363 (QEKEAIERLKALGFPESLVIQAYFACEKNENLAANFLLSQNFDDE) form an HIV-1 vpr binding region.

This sequence belongs to the RAD23 family. Interacts with XPC; the interaction is suggesting the existence of a functional equivalent variant XPC complex. Interacts with PSMD4 and PSMC5. Interacts with ATXN3. Interacts with UBQLN2. In terms of assembly, (Microbial infection) Interacts with HIV-1 Vpr.

It localises to the nucleus. Its function is as follows. Multiubiquitin chain receptor involved in modulation of proteasomal degradation. Binds to 'Lys-48'-linked polyubiquitin chains in a length-dependent manner and with a lower affinity to 'Lys-63'-linked polyubiquitin chains. Proposed to be capable to bind simultaneously to the 26S proteasome and to polyubiquitinated substrates and to deliver ubiquitinated proteins to the proteasome. In terms of biological role, involved in nucleotide excision repair and is thought to be functional equivalent for RAD23B in global genome nucleotide excision repair (GG-NER) by association with XPC. In vitro, the XPC:RAD23A dimer has NER activity. Can stabilize XPC. (Microbial infection) Involved in Vpr-dependent replication of HIV-1 in non-proliferating cells and primary macrophages. Required for the association of HIV-1 Vpr with the host proteasome. The chain is UV excision repair protein RAD23 homolog A (RAD23A) from Homo sapiens (Human).